The primary structure comprises 405 residues: Imidazolonepropionase (405 aa).

The Fe(3+) site is built by H70 and H72. Residues H70 and H72 each coordinate Zn(2+). Residues R79, Y142, and H175 each coordinate 4-imidazolone-5-propanoate. Residue Y142 participates in N-formimidoyl-L-glutamate binding. H240 serves as a coordination point for Fe(3+). H240 provides a ligand contact to Zn(2+). Residue Q243 coordinates 4-imidazolone-5-propanoate. Position 315 (D315) interacts with Fe(3+). D315 contributes to the Zn(2+) binding site. The N-formimidoyl-L-glutamate site is built by N317 and G319. S320 is a binding site for 4-imidazolone-5-propanoate.

It belongs to the metallo-dependent hydrolases superfamily. HutI family. Zn(2+) is required as a cofactor. Requires Fe(3+) as cofactor.

It localises to the cytoplasm. The enzyme catalyses 4-imidazolone-5-propanoate + H2O = N-formimidoyl-L-glutamate. Its pathway is amino-acid degradation; L-histidine degradation into L-glutamate; N-formimidoyl-L-glutamate from L-histidine: step 3/3. Its function is as follows. Catalyzes the hydrolytic cleavage of the carbon-nitrogen bond in imidazolone-5-propanoate to yield N-formimidoyl-L-glutamate. It is the third step in the universal histidine degradation pathway. The sequence is that of Imidazolonepropionase from Ruegeria sp. (strain TM1040) (Silicibacter sp.).